The following is a 345-amino-acid chain: N-acetyl-gamma-glutamyl-phosphate reductase (345 aa).

Residue Cys-149 is part of the active site.

The protein belongs to the NAGSA dehydrogenase family. Type 1 subfamily.

The protein resides in the cytoplasm. It carries out the reaction N-acetyl-L-glutamate 5-semialdehyde + phosphate + NADP(+) = N-acetyl-L-glutamyl 5-phosphate + NADPH + H(+). The protein operates within amino-acid biosynthesis; L-arginine biosynthesis; N(2)-acetyl-L-ornithine from L-glutamate: step 3/4. Catalyzes the NADPH-dependent reduction of N-acetyl-5-glutamyl phosphate to yield N-acetyl-L-glutamate 5-semialdehyde. This is N-acetyl-gamma-glutamyl-phosphate reductase from Janthinobacterium sp. (strain Marseille) (Minibacterium massiliensis).